We begin with the raw amino-acid sequence, 149 residues long: Cytochrome c-type biogenesis protein CcmE (149 aa).

Over 1 to 8 the chain is Cytoplasmic; sequence MNPKRKQR. A helical; Signal-anchor for type II membrane protein transmembrane segment spans residues 9–29; sequence LIIVSFLVIGVSATVGLIMAA. Topologically, residues 30-149 are periplasmic; it reads LSSNVNHFYN…AQDAAPAQTY (120 aa). Histidine 124 and tyrosine 128 together coordinate heme.

It belongs to the CcmE/CycJ family.

Its subcellular location is the cell inner membrane. Functionally, heme chaperone required for the biogenesis of c-type cytochromes. Transiently binds heme delivered by CcmC and transfers the heme to apo-cytochromes in a process facilitated by CcmF and CcmH. This Hahella chejuensis (strain KCTC 2396) protein is Cytochrome c-type biogenesis protein CcmE.